The sequence spans 443 residues: Serine/threonine-protein phosphatase 2A 55 kDa regulatory subunit B beta isoform (443 aa).

WD repeat units lie at residues 22–61 (TEAD…KSQP), 87–128 (EIEE…KRPE), 171–209 (AHTY…RSFN), 220–260 (ELTE…LCDN), 279–317 (EIIS…KPLE), 334–375 (ENDC…DVTL), and 410–443 (DFSK…DKVN).

It belongs to the phosphatase 2A regulatory subunit B family. In terms of assembly, PP2A consists of a common heterodimeric core enzyme, composed of a 36 kDa catalytic subunit (subunit C) and a 65 kDa constant regulatory subunit (PR65 or subunit A), that associates with a variety of regulatory subunits.

It is found in the cytoplasm. The protein localises to the cytoskeleton. Its subcellular location is the membrane. In terms of biological role, the B regulatory subunit might modulate substrate selectivity and catalytic activity, and might also direct the localization of the catalytic enzyme to a particular subcellular compartment. This Carassius auratus (Goldfish) protein is Serine/threonine-protein phosphatase 2A 55 kDa regulatory subunit B beta isoform (ppp2r2b).